We begin with the raw amino-acid sequence, 106 residues long: RxLR effector protein PSR1 (106 aa).

The signal sequence occupies residues Met-1–Ala-20. Positions Arg-33 to Arg-46 match the RxLR-dEER motif. The WY domain stretch occupies residues Phe-50–Gln-106. A Bipartite nuclear localization signal (NLS) motif is present at residues Arg-56–Phe-69.

This sequence belongs to the RxLR effector family. In terms of assembly, interacts with host PINP1.

The protein resides in the secreted. The protein localises to the host nucleus. In terms of biological role, secreted effector that possesses RNA silencing suppression activity by inhibiting the biogenesis of small RNAs in the host plant to promote enhanced susceptibility of host to the pathogen during infection. Interferes with secondary siRNA production by associating with host nuclear protein PINP1 that acts as a regulator of the accumulation of both microRNAs and endogenous small interfering RNAs. The polypeptide is RxLR effector protein PSR1 (Phytophthora sojae (Soybean stem and root rot agent)).